A 436-amino-acid polypeptide reads, in one-letter code: 3-ketoacyl-CoA thiolase (436 aa).

Cys-99 functions as the Acyl-thioester intermediate in the catalytic mechanism. Residues His-392 and Cys-422 each act as proton acceptor in the active site.

Belongs to the thiolase-like superfamily. Thiolase family. As to quaternary structure, heterotetramer of two alpha chains (FadJ) and two beta chains (FadI).

The protein resides in the cytoplasm. The catalysed reaction is an acyl-CoA + acetyl-CoA = a 3-oxoacyl-CoA + CoA. It functions in the pathway lipid metabolism; fatty acid beta-oxidation. Its function is as follows. Catalyzes the final step of fatty acid oxidation in which acetyl-CoA is released and the CoA ester of a fatty acid two carbons shorter is formed. This Shewanella amazonensis (strain ATCC BAA-1098 / SB2B) protein is 3-ketoacyl-CoA thiolase.